Here is a 411-residue protein sequence, read N- to C-terminus: MAEKTEKPTAKKLRDAAKKGQTFKARDIVALIVIATGALAAPALVDLTRIAAEFVRIASTGAQPNPGAYAFAWAKLFLRIAAPFVLLCAAAGALPSLVQSRFTLAVESIRFDLTALDPVKGMKRLFSWRSAKDAVKALLYVGVFALTVRVFADLYHADVFGLFRARPALLGHMWIVLTVRLVLLFLLCALPVLILDAAVEYFLYHRELKMDKHEVKQEYKESEGNHEIKSKRREIHQELLSEEIKANVEQSDFIVANPTHIAIGVYVNPDIVPIPFVSVRETNARALAVIRHAEACGVPVVRNVALARSIYRNSPRRYSFVSHDDIDGVMRVLIWLGEVEAANRGGPPPETRAPTSAEPQARDGVAPPGDACADNAFPDDAPPGAAAPNAGSPDGPAPDGGAPARTGDQNA.

The next 4 membrane-spanning stretches (helical) occupy residues 28-48 (IVALIVIATGALAAPALVDLT), 80-100 (IAAPFVLLCAAAGALPSLVQS), 137-157 (ALLYVGVFALTVRVFADLYHA), and 175-195 (IVLTVRLVLLFLLCALPVLIL). The interval 341-411 (AANRGGPPPE…APARTGDQNA (71 aa)) is disordered. Low complexity predominate over residues 370–404 (DACADNAFPDDAPPGAAAPNAGSPDGPAPDGGAPA).

The protein belongs to the type III secretion exporter family.

The protein resides in the cell membrane. Part of the bsa type III secretion system, is involved in the intracellular replication of invading bacteria inside the host cell. Probably necessary for the lysis of the vacuole membrane and escape into the host cell cytoplasm. The protein is Secretion apparatus protein BsaZ (bsaZ) of Burkholderia pseudomallei (strain K96243).